We begin with the raw amino-acid sequence, 409 residues long: MAMRWSCWRRGCSWRPTAVGSPRRERPGCVEPLGTRAASDTRAQIPYFSLMKILMSASPTMHSISQFHQRTPAMCSCRQTQSGEKYSDPFKLGWRDLKGLYEDIRKELHISTRELKDMSEYYFDGKGKAFRPIIVVLMARACNIHHNNAREMQASQRSIALVAEMIHTATLVHDDVIDDASSRRGKHTVNKIWGEKKAVLAGDLILSAASVALARIGNTAVVSMLAQVIEDLVRGEFLQLGSKENENERFAHYLEKTFKKTASLIANSCKAVSVLGCPDPVVHEIAYQYGKNVGIAFQLIDDVLDFTSCSDQMGKPTSADLKLGIATGPVLFACQQFPEMNAMIMRRFSLPGDVDRARQYVLQSDGVQQTTYLAQQYCHKAVREIRKLRPSTERDALIQLSESVLTRDK.

Residues Lys128, Arg131, and His167 each coordinate isopentenyl diphosphate. Residues Asp174 and Asp178 each contribute to the Mg(2+) site. Arg184 contributes to the isopentenyl diphosphate binding site.

This sequence belongs to the FPP/GGPP synthase family. As to quaternary structure, heterotetramer composed of 2 PDSS1/DPS1 and 2 PDSS2/DLP1 subunits. The cofactor is Mg(2+).

Its subcellular location is the mitochondrion. The enzyme catalyses 7 isopentenyl diphosphate + (2E,6E)-farnesyl diphosphate = all-trans-decaprenyl diphosphate + 7 diphosphate. The catalysed reaction is 6 isopentenyl diphosphate + (2E,6E)-farnesyl diphosphate = all-trans-nonaprenyl diphosphate + 6 diphosphate. It functions in the pathway cofactor biosynthesis; ubiquinone biosynthesis. Its function is as follows. Heterotetrameric enzyme that catalyzes the condensation of farnesyl diphosphate (FPP), which acts as a primer, and isopentenyl diphosphate (IPP) to produce prenyl diphosphates of varying chain lengths and participates in the determination of the side chain of ubiquinone. Supplies nona and decaprenyl diphosphate, the precursors for the side chain of the isoprenoid quinones ubiquinone-9 (Q9)and ubiquinone-10 (Q10) respectively. The enzyme adds isopentenyl diphosphate molecules sequentially to farnesyl diphosphate with trans stereochemistry. The polypeptide is All trans-polyprenyl-diphosphate synthase PDSS1 (Mus musculus (Mouse)).